The chain runs to 819 residues: Nonribosomal peptide synthetase 9 (819 aa).

An adenylation (A) domain region spans residues L202–R591. Residues Q722–S798 form the Carrier domain. The residue at position 759 (S759) is an O-(pantetheine 4'-phosphoryl)serine.

This sequence belongs to the NRP synthetase family.

Its pathway is secondary metabolite biosynthesis. In terms of biological role, nonribosomal peptide synthetase; part of the Fg3_54/C64 gene cluster that mediates the biosynthesis of the octapeptide fusaoctaxin A, a virulence factor that is required for cell-to-cell invasiveness of plant host. The 2 nonribosomal peptide synthetases NRPS9 and NRPS5 form an assembly line which likely utilizes GABA as a starter unit (loaded on the unique module M1 of NRPS9) and sequentially incorporates seven extender units composed of the residues L-Ala, L-allo-Ile, L-Ser, L-Val, L-Ser, L-Leu and L-Leu, respectively. During the process, each of the residues that are tethered on modules M3-M7 of NRPS5 containing an E domain can undergo an epimerization reaction to produce a D-configuration before the transpeptidation reaction occurs. The elongation of the peptidyl chain might be terminated by module M8-mediated L-Leu incorporation, followed by R domain-catalyzed 4 electron reduction to release the resulting octapeptide from the assembly line as an alcohol. Fusaoctaxin A is cleaved by the cluster specific ABC transporter FGM5 to the pentapeptide fusapentaxin A and the tripeptide fusatrixin A. The other enzymes from the cluster, FGM1, FGM2, FGM3 and FGM9 seem not to be involved in the biosynthesis of fusaoctaxin A and their functions have still to be determined. The chain is Nonribosomal peptide synthetase 9 from Gibberella zeae (strain ATCC MYA-4620 / CBS 123657 / FGSC 9075 / NRRL 31084 / PH-1) (Wheat head blight fungus).